The following is a 268-amino-acid chain: MMQALTNPFPIGSSSLIHCMTNEISCEMLANGILALGCKPVMADDPREVLDFTKQSQALFINLGHLSAEKEKAIRMAALYANQSSLPMVVDAVGVTTSSIRKSLVKDLLDYRPTVLKGNMSEIRSLVGLKHHGVGVDASAKDQETEDLLQVLKDWCQTYPGMSFLVTGPKDLVVSKNQVAVLENGCTELDWITGTGDLVGALTAVFLSQGKTGFEASCLAVSYLNIAAEKIVVQGMGLEEFRYQVLNQLSLLRRDENWLDTIKGEAYE.

Substrate is bound at residue M42. ATP-binding residues include K117 and T167. G194 is a substrate binding site.

It belongs to the Thz kinase family. It depends on Mg(2+) as a cofactor.

It catalyses the reaction 5-(2-hydroxyethyl)-4-methylthiazole + ATP = 4-methyl-5-(2-phosphooxyethyl)-thiazole + ADP + H(+). It participates in cofactor biosynthesis; thiamine diphosphate biosynthesis; 4-methyl-5-(2-phosphoethyl)-thiazole from 5-(2-hydroxyethyl)-4-methylthiazole: step 1/1. Catalyzes the phosphorylation of the hydroxyl group of 4-methyl-5-beta-hydroxyethylthiazole (THZ). This chain is Hydroxyethylthiazole kinase 2, found in Streptococcus pneumoniae (strain CGSP14).